The primary structure comprises 388 residues: Cdc42 effector protein 1 (388 aa).

The interval 1 to 28 (MPGPQGGTGAPSMSLGKLSPVGWVPSSH) is disordered. 2 positions are modified to phosphoserine: S19 and S27. T34 is subject to Phosphothreonine. The region spanning 38–52 (ISPPLGDFRHTMHVG) is the CRIB domain. A Phosphoserine modification is found at S39. R53 is subject to Omega-N-methylarginine. Phosphoserine occurs at positions 65, 77, 101, 113, 121, and 139. Residues 165-206 (RLPRVEKHSSRDRDHDRDPDHSQDREQSSSPSEPNPNPELRR) are disordered. Residues 167–191 (PRVEKHSSRDRDHDRDPDHSQDREQ) show a composition bias toward basic and acidic residues. Phosphoserine is present on residues S193, S207, S209, and S212. 2 consecutive repeat copies span residues 237 to 243 (PAANPPA) and 250 to 256 (PTAKPPA). A disordered region spans residues 237–257 (PAANPPAPAANPAPTAKPPAD). A 2 X 7 AA tandem repeats of [PT]-[AT]-A-[ENT]-[PT]-[PTS]-[AG] region spans residues 237–270 (PAANPPAPAANPAPTAKPPADAVTTLDTVTSLPA). Pro residues predominate over residues 239 to 253 (ANPPAPAANPAPTAK). S298, S318, S347, and S350 each carry phosphoserine.

This sequence belongs to the BORG/CEP family. Interacts with RHOQ and CDC42, in a GTP-dependent manner.

It localises to the endomembrane system. The protein resides in the cytoplasm. It is found in the cytoskeleton. In terms of biological role, probably involved in the organization of the actin cytoskeleton. Induced membrane extensions in fibroblasts. The chain is Cdc42 effector protein 1 from Rattus norvegicus (Rat).